A 517-amino-acid chain; its full sequence is GMP synthase [glutamine-hydrolyzing] (517 aa).

Residues 9–199 (RILILDFGSQ…VLNVCGCEGL (191 aa)) enclose the Glutamine amidotransferase type-1 domain. Catalysis depends on cysteine 86, which acts as the Nucleophile. Active-site residues include histidine 173 and glutamate 175. Residues 200 to 392 (WTSASIIEDA…LGLPYNMLYR (193 aa)) enclose the GMPS ATP-PPase domain. 227 to 233 (SGGVDSS) lines the ATP pocket.

As to quaternary structure, homodimer.

The catalysed reaction is XMP + L-glutamine + ATP + H2O = GMP + L-glutamate + AMP + diphosphate + 2 H(+). It participates in purine metabolism; GMP biosynthesis; GMP from XMP (L-Gln route): step 1/1. In terms of biological role, catalyzes the synthesis of GMP from XMP. The polypeptide is GMP synthase [glutamine-hydrolyzing] (Aliivibrio salmonicida (strain LFI1238) (Vibrio salmonicida (strain LFI1238))).